The following is a 156-amino-acid chain: Large ribosomal subunit protein uL22c (156 aa).

This sequence belongs to the universal ribosomal protein uL22 family. In terms of assembly, part of the 50S ribosomal subunit.

The protein resides in the plastid. The protein localises to the chloroplast. Its function is as follows. This protein binds specifically to 23S rRNA. In terms of biological role, the globular domain of the protein is located near the polypeptide exit tunnel on the outside of the subunit, while an extended beta-hairpin is found that lines the wall of the exit tunnel in the center of the 70S ribosome. The chain is Large ribosomal subunit protein uL22c (rpl22) from Buxus microphylla (Littleleaf boxwood).